Here is a 206-residue protein sequence, read N- to C-terminus: Probable GTP-binding protein EngB (206 aa).

Residues 29-201 (ILPEVAVVGR…MIMIQDALND (173 aa)) form the EngB-type G domain. Residues 37-44 (GRSNVGKS), 64-68 (GKTQA), 82-85 (DLPG), 149-152 (TKID), and 180-182 (YSV) each bind GTP. 2 residues coordinate Mg(2+): serine 44 and threonine 66.

The protein belongs to the TRAFAC class TrmE-Era-EngA-EngB-Septin-like GTPase superfamily. EngB GTPase family. Mg(2+) is required as a cofactor.

In terms of biological role, necessary for normal cell division and for the maintenance of normal septation. The polypeptide is Probable GTP-binding protein EngB (Protochlamydia amoebophila (strain UWE25)).